The following is a 515-amino-acid chain: Acetyltransferase sphE (515 aa).

Catalysis depends on proton acceptor residues His-184 and Asp-438.

It belongs to the plant acyltransferase family. Monomer.

It catalyses the reaction sphingofungin B + acetyl-CoA = sphingofungin C + CoA. Its pathway is secondary metabolite biosynthesis. Its function is as follows. Acetyltransferase; part of the gene cluster that mediates the biosynthesis of sphingofungins, bioactive molecules acting as sphingolipid inhibitors via inhibiting serine palmitoyl transferase (SPT). Within the pathway, sphE catalyzes the O-acetylation of the C-5 hydroxyl group of sphingofungin B to produce sphingofungin C. SphE can also convert sphingofungin B1 into sphingofungin C1 and sphingofungin B2 into sphingofungin C2. Sphingofungin biosynthesis starts with the PKS sphB that produces an C18 polyketide precursor 3-hydroxyoctadeca-4,10-dienoyl-ACP containing one delta-6 desaturation and one delta-12 desaturation. The aminoacyl transferase sphA uses the sphB product to produce 3-keto-presphingofungin by adding an aminomalonate molecule. SphF then reduces the C-3 ketone of 3-keto-presphingofungin which leads to presphingofungin. The cytochrome P450 monooxygenase sphH converts presphingofungin into sphingofungin B1 which is further converted to sphingofungin B by the dioxygenase sphC. SphC is also able to convert presphingofungin into sphingofungin B2. The acetyltransferase sphE acetylates sphingofungin B to produce sphingofungin C, but can also convert sphingofungin B1 into sphingofungin C1 and sphingofungin B2 into sphingofungin C2. Finally, sphingofungin C can be spontaneously converted into sphingofungin D. The sequence is that of Acetyltransferase sphE from Aspergillus fumigatus (strain CBS 144.89 / FGSC A1163 / CEA10) (Neosartorya fumigata).